The primary structure comprises 378 residues: Lipid-A-disaccharide synthase (378 aa).

It belongs to the LpxB family.

It catalyses the reaction a lipid X + a UDP-2-N,3-O-bis[(3R)-3-hydroxyacyl]-alpha-D-glucosamine = a lipid A disaccharide + UDP + H(+). It functions in the pathway bacterial outer membrane biogenesis; LPS lipid A biosynthesis. Its function is as follows. Condensation of UDP-2,3-diacylglucosamine and 2,3-diacylglucosamine-1-phosphate to form lipid A disaccharide, a precursor of lipid A, a phosphorylated glycolipid that anchors the lipopolysaccharide to the outer membrane of the cell. The sequence is that of Lipid-A-disaccharide synthase from Pseudomonas paraeruginosa (strain DSM 24068 / PA7) (Pseudomonas aeruginosa (strain PA7)).